The sequence spans 211 residues: Probable nicotinate-nucleotide adenylyltransferase (211 aa).

It belongs to the NadD family.

The catalysed reaction is nicotinate beta-D-ribonucleotide + ATP + H(+) = deamido-NAD(+) + diphosphate. The protein operates within cofactor biosynthesis; NAD(+) biosynthesis; deamido-NAD(+) from nicotinate D-ribonucleotide: step 1/1. In terms of biological role, catalyzes the reversible adenylation of nicotinate mononucleotide (NaMN) to nicotinic acid adenine dinucleotide (NaAD). This is Probable nicotinate-nucleotide adenylyltransferase from Shewanella sediminis (strain HAW-EB3).